A 322-amino-acid polypeptide reads, in one-letter code: tRNA dimethylallyltransferase (322 aa).

Residue 18–25 (GPTASGKS) participates in ATP binding. Residue 20-25 (TASGKS) coordinates substrate. Interaction with substrate tRNA regions lie at residues 43–46 (DSRQ) and 167–171 (QRLVR).

It belongs to the IPP transferase family. In terms of assembly, monomer. Mg(2+) serves as cofactor.

It carries out the reaction adenosine(37) in tRNA + dimethylallyl diphosphate = N(6)-dimethylallyladenosine(37) in tRNA + diphosphate. Its function is as follows. Catalyzes the transfer of a dimethylallyl group onto the adenine at position 37 in tRNAs that read codons beginning with uridine, leading to the formation of N6-(dimethylallyl)adenosine (i(6)A). This chain is tRNA dimethylallyltransferase, found in Chlorobium phaeobacteroides (strain BS1).